Reading from the N-terminus, the 224-residue chain is Pyridoxine/pyridoxamine 5'-phosphate oxidase (224 aa).

Residues 14-17 and Lys-76 contribute to the substrate site; that span reads REHY. Residues 71–76, 86–87, Arg-92, Lys-93, and Gln-115 contribute to the FMN site; these read RTVLMK and YT. Tyr-133, Arg-137, and Ser-141 together coordinate substrate. Residues 150–151 and Trp-196 contribute to the FMN site; that span reads QS. 202 to 204 is a substrate binding site; the sequence is RLH. Residue Arg-206 participates in FMN binding.

Belongs to the pyridoxamine 5'-phosphate oxidase family. Homodimer. FMN serves as cofactor.

The catalysed reaction is pyridoxamine 5'-phosphate + O2 + H2O = pyridoxal 5'-phosphate + H2O2 + NH4(+). The enzyme catalyses pyridoxine 5'-phosphate + O2 = pyridoxal 5'-phosphate + H2O2. Its pathway is cofactor metabolism; pyridoxal 5'-phosphate salvage; pyridoxal 5'-phosphate from pyridoxamine 5'-phosphate: step 1/1. It functions in the pathway cofactor metabolism; pyridoxal 5'-phosphate salvage; pyridoxal 5'-phosphate from pyridoxine 5'-phosphate: step 1/1. Catalyzes the oxidation of either pyridoxine 5'-phosphate (PNP) or pyridoxamine 5'-phosphate (PMP) into pyridoxal 5'-phosphate (PLP). This Streptomyces avermitilis (strain ATCC 31267 / DSM 46492 / JCM 5070 / NBRC 14893 / NCIMB 12804 / NRRL 8165 / MA-4680) protein is Pyridoxine/pyridoxamine 5'-phosphate oxidase.